The sequence spans 205 residues: Glycerol-3-phosphate acyltransferase (205 aa).

5 helical membrane passes run 4-24 (IAPG…AILV), 56-76 (VAVL…AYAL), 81-101 (FWLG…VFFG), 112-132 (FGAI…TWLL), and 138-158 (GYSS…VWWF).

Belongs to the PlsY family. In terms of assembly, probably interacts with PlsX.

It is found in the cell inner membrane. It carries out the reaction an acyl phosphate + sn-glycerol 3-phosphate = a 1-acyl-sn-glycero-3-phosphate + phosphate. Its pathway is lipid metabolism; phospholipid metabolism. Catalyzes the transfer of an acyl group from acyl-phosphate (acyl-PO(4)) to glycerol-3-phosphate (G3P) to form lysophosphatidic acid (LPA). This enzyme utilizes acyl-phosphate as fatty acyl donor, but not acyl-CoA or acyl-ACP. This Citrobacter koseri (strain ATCC BAA-895 / CDC 4225-83 / SGSC4696) protein is Glycerol-3-phosphate acyltransferase.